A 315-amino-acid polypeptide reads, in one-letter code: Glycine--tRNA ligase alpha subunit (315 aa).

This sequence belongs to the class-II aminoacyl-tRNA synthetase family. As to quaternary structure, tetramer of two alpha and two beta subunits.

The protein resides in the cytoplasm. The enzyme catalyses tRNA(Gly) + glycine + ATP = glycyl-tRNA(Gly) + AMP + diphosphate. This Pseudomonas putida (strain ATCC 47054 / DSM 6125 / CFBP 8728 / NCIMB 11950 / KT2440) protein is Glycine--tRNA ligase alpha subunit.